The primary structure comprises 2485 residues: MHVSLAEALEVRGGPLQEEEIWAVLNQSAESLQELFRKVSLADPAALGFIISPWSLLLLPSGSVSFTDENISNQDLRAFTAPEVLQNQSLTSLSDVEKIHIYSLGMTLYWGADYEVPQSQPIKLGDHLNSILLGMCEDVIYARVSVRTVLDACSAHIRNSNCAPSFSYVKHLVKLVLGNLSGTDQLSCNSEQKPDRSQAIRDRLRGKGLPTGRSSTSDVLDIQKPPLSHQTFLNKGLSKSMGFLSIKDTQDENYFKDILSDNSGREDSENTFSPYQFKTSGPEKKPIPGIDVLSKKKIWASSMDLLCTADRDFSSGETATYRRCHPEAVTVRTSTTPRKKEARYSDGSIALDIFGPQKMDPIYHTRELPTSSAISSALDRIRERQKKLQVLREAMNVEEPVRRYKTYHGDVFSTSSESPSIISSESDFRQVRRSEASKRFESSSGLPGVDETLSQGQSQRPSRQYETPFEGNLINQEIMLKRQEEELMQLQAKMALRQSRLSLYPGDTIKASMLDITRDPLREIALETAMTQRKLRNFFGPEFVKMTIEPFISLDLPRSILTKKGKNEDNRRKVNIMLLNGQRLELTCDTKTICKDVFDMVVAHIGLVEHHLFALATLKDNEYFFVDPDLKLTKVAPEGWKEEPKKKTKATVNFTLFFRIKFFMDDVSLIQHTLTCHQYYLQLRKDILEERMHCDDETSLLLASLALQAEYGDYQPEVHGVSYFRMEHYLPARVMEKLDLSYIKEELPKLHNTYVGASEKETELEFLKVCQRLTEYGVHFHRVHPEKKSQTGILLGVCSKGVLVFEVHNGVRTLVLRFPWRETKKISFSKKKITLQNTSDGIKHGFQTDNSKICQYLLHLCSYQHKFQLQMRARQSNQDAQDIERASFRSLNLQAESVRGFNMGRAISTGSLASSTLNKLAVRPLSVQAEILKRLSCSELSLYQPLQNSSKEKNDKASWEEKPREMSKSYHDLSQASLYPHRKNVIVNMEPPPQTVAELVGKPSHQMSRSDAESLAGVTKLNNSKSVASLNRSPERRKHESDSSSIEDPGQAYVLGMTMHSSGNSSSQVPLKENDVLHKRWSIVSSPEREITLVNLKKDAKYGLGFQIIGGEKMGRLDLGIFISSVAPGGPADLDGCLKPGDRLISVNSVSLEGVSHHAAIEILQNAPEDVTLVISQPKEKISKVPSTPVHLTNEMKNYMKKSSYMQDSAIDSSSKDHHWSRGTLRHISENSFGPSGGLREGSLSSQDSRTESASLSQSQVNGFFASHLGDQTWQESQHGSPSPSVISKATEKETFTDSNQSKTKKPGISDVTDYSDRGDSDMDEATYSSSQDHQTPKQESSSSVNTSNKMNFKTFSSSPPKPGDIFEVELAKNDNSLGISVTGGVNTSVRHGGIYVKAVIPQGAAESDGRIHKGDRVLAVNGVSLEGATHKQAVETLRNTGQVVHLLLEKGQSPTSKEHVPVTPQCTLSDQNAQGQGPEKVKKTTQVKDYSFVTEENTFEVKLFKNSSGLGFSFSREDNLIPEQINASIVRVKKLFPGQPAAESGKIDVGDVILKVNGASLKGLSQQEVISALRGTAPEVFLLLCRPPPGVLPEIDTALLTPLQSPAQVLPNSSKDSSQPSCVEQSTSSDENEMSDKSKKQCKSPSRRDSYSDSSGSGEDDLVTAPANISNSTWSSALHQTLSNMVSQAQSHHEAPKSQEDTICTMFYYPQKIPNKPEFEDSNPSPLPPDMAPGQSYQPQSESASSSSMDKYHIHHISEPTRQENWTPLKNDLENHLEDFELEVELLITLIKSEKGSLGFTVTKGNQRIGCYVHDVIQDPAKSDGRLKPGDRLIKVNDTDVTNMTHTDAVNLLRAASKTVRLVIGRVLELPRIPMLPHLLPDITLTCNKEELGFSLCGGHDSLYQVVYISDINPRSVAAIEGNLQLLDVIHYVNGVSTQGMTLEEVNRALDMSLPSLVLKATRNDLPVVPSSKRSAVSAPKSTKGNGSYSVGSCSQPALTPNDSFSTVAGEEINEISYPKGKCSTYQIKGSPNLTLPKESYIQEDDIYDDSQEAEVIQSLLDVVDEEAQNLLNENNAAGYSCGPGTLKMNGKLSEERTEDTDCDGSPLPEYFTEATKMNGCEEYCEEKVKSESLIQKPQEKKTDDDEITWGNDELPIERTNHEDSDKDHSFLTNDELAVLPVVKVLPSGKYTGANLKSVIRVLRGLLDQGIPSKELENLQELKPLDQCLIGQTKENRRKNRYKNILPYDATRVPLGDEGGYINASFIKIPVGKEEFVYIACQGPLPTTVGDFWQMIWEQKSTVIAMMTQEVEGEKIKCQRYWPNILGKTTMVSNRLRLALVRMQQLKGFVVRAMTLEDIQTREVRHISHLNFTAWPDHDTPSQPDDLLTFISYMRHIHRSGPIITHCSAGIGRSGTLICIDVVLGLISQDLDFDISDLVRCMRLQRHGMVQTEDQYIFCYQVILYVLTRLQAEEEQKQQPQLLK.

The KIND domain occupies 3 to 190; that stretch reads VSLAEALEVR…SGTDQLSCNS (188 aa). Positions 186–220 are disordered; that stretch reads LSCNSEQKPDRSQAIRDRLRGKGLPTGRSSTSDVL. A compositionally biased stretch (basic and acidic residues) spans 192–205; that stretch reads QKPDRSQAIRDRLR. At serine 240 the chain carries Phosphoserine. The tract at residues 260–283 is disordered; sequence SDNSGREDSENTFSPYQFKTSGPE. Residues 270–279 are compositionally biased toward polar residues; it reads NTFSPYQFKT. 2 positions are modified to phosphoserine: serine 301 and serine 302. The disordered stretch occupies residues 433–467; that stretch reads RSEASKRFESSSGLPGVDETLSQGQSQRPSRQYET. A compositionally biased stretch (polar residues) spans 452 to 465; sequence TLSQGQSQRPSRQY. A coiled-coil region spans residues 469–504; sequence FEGNLINQEIMLKRQEEELMQLQAKMALRQSRLSLY. Positions 572 to 872 constitute an FERM domain; sequence RKVNIMLLNG…YQHKFQLQMR (301 aa). Phosphoserine is present on residues serine 890, serine 897, serine 908, serine 911, and serine 914. Disordered stretches follow at residues 947-975 and 995-1049; these read QNSS…DLSQ and TVAE…IEDP. A compositionally biased stretch (basic and acidic residues) spans 950–971; sequence SKEKNDKASWEEKPREMSKSYH. Over residues 1020-1032 the composition is skewed to polar residues; it reads KLNNSKSVASLNR. A phosphoserine mark is found at serine 1029, serine 1033, and serine 1085. Basic and acidic residues predominate over residues 1033-1042; that stretch reads SPERRKHESD. Residues 1093-1178 form the PDZ 1 domain; it reads LVNLKKDAKY…EDVTLVISQP (86 aa). 2 disordered regions span residues 1227-1258 and 1273-1362; these read HISE…SLSQ and TWQE…SPPK. Polar residues-rich tracts occupy residues 1243–1258, 1273–1288, and 1327–1359; these read SLSS…SLSQ, TWQE…SVIS, and TYSS…FSSS. PDZ domains lie at 1368-1452 and 1501-1588; these read EVEL…LEKG and EVKL…LCRP. A compositionally biased stretch (polar residues) spans 1608 to 1630; it reads AQVLPNSSKDSSQPSCVEQSTSS. 2 disordered regions span residues 1608 to 1665 and 1715 to 1751; these read AQVL…DLVT and PNKP…SSMD. Positions 1736 to 1749 are enriched in low complexity; it reads QSYQPQSESASSSS. 2 consecutive PDZ domains span residues 1788 to 1868 and 1882 to 1965; these read LITL…IGRV and PDIT…ATRN. Residues 1971 to 1996 are disordered; the sequence is PSSKRSAVSAPKSTKGNGSYSVGSCS. Residues 1973-1996 show a composition bias toward polar residues; sequence SKRSAVSAPKSTKGNGSYSVGSCS. A Tyrosine-protein phosphatase domain is found at 2213-2467; it reads PSKELENLQE…IFCYQVILYV (255 aa). Substrate is bound by residues aspartate 2378, 2408–2414, and glutamine 2452; that span reads CSAGIGR. The Phosphocysteine intermediate role is filled by cysteine 2408. The segment at 2408–2414 is substrate; that stretch reads CSAGIGR.

This sequence belongs to the protein-tyrosine phosphatase family. Non-receptor class subfamily. In terms of assembly, interacts (via the first PDZ domain) with PLEKHA1 and PLEKHA2. Interacts (via the second PDZ domain) with TNFRSF6 (Fas receptor) (via C-terminus). Interacts (via the second PDZ domain) with TRIP6 (via the third LIM domain and C-terminus). Interacts (via the third PDZ domain) with NGFR (via C-terminal SVP motif) and PKN2 (via C-terminus). Interacts (via the second or fourth PDZ domains) with PDLIM4 (via C-terminus only or via combined C-terminus and LIM domain, but not LIM domain only). Found in a complex with PDLIM4 and TRIP6. Interacts with PDLIM4; this interaction results in dephosphorylation of SRC 'Tyr-419' by this protein leading to its inactivation. Interacts with BRD7. Interacts with RAPGEF6. Interacts with ARHGAP29. Interacts with PIK3R2; dephosphorylates PIK3R2. Interacts with FBXL2. Interacts (via the FERM domain) with ENTR1. Found in a complex with ENTR1, PTPN13 and GIT1. As to expression, expressed in keratinocytes (at protein level). Present in most tissues with the exception of the liver and skeletal muscle. Most abundant in lung, kidney and fetal brain.

Its subcellular location is the cytoplasm. The protein localises to the cytoskeleton. It is found in the nucleus. The protein resides in the cell projection. It localises to the lamellipodium. It catalyses the reaction O-phospho-L-tyrosyl-[protein] + H2O = L-tyrosyl-[protein] + phosphate. Functionally, tyrosine phosphatase which negatively regulates FAS-induced apoptosis and NGFR-mediated pro-apoptotic signaling. May regulate phosphoinositide 3-kinase (PI3K) signaling through dephosphorylation of PIK3R2. This chain is Tyrosine-protein phosphatase non-receptor type 13 (PTPN13), found in Homo sapiens (Human).